Here is a 452-residue protein sequence, read N- to C-terminus: Gamma-aminobutyric acid receptor subunit delta (452 aa).

Positions 1–24 (MDAPARLLAPLLLLCAQQLRGTRA) are cleaved as a signal peptide. Topologically, residues 25-251 (MNDIGDYVGS…HLRRNRGVYI (227 aa)) are extracellular. Asn103 and Asn106 each carry an N-linked (GlcNAc...) asparagine glycan. Cys164 and Cys178 are disulfide-bonded. A helical transmembrane segment spans residues 252 to 271 (IQSYMPSVLLVAMSWVSFWI). Over 272–275 (SQAA) the chain is Cytoplasmic. The chain crosses the membrane as a helical span at residues 276-298 (VPARVSLGITTVLTMTTLMVSAR). Residues 299 to 308 (SSLPRASAIK) are Extracellular-facing. The chain crosses the membrane as a helical span at residues 309–331 (ALDVYFWICYVFVFAALVEYAFA). The Cytoplasmic segment spans residues 332–426 (HFNADYRKKQ…ARLRPIDADT (95 aa)). A Phosphoserine modification is found at Ser390. A helical membrane pass occupies residues 427 to 449 (IDIYARAVFPAAFAAVNVIYWAA). Residues 450–452 (YAM) lie on the Extracellular side of the membrane.

This sequence belongs to the ligand-gated ion channel (TC 1.A.9) family. Gamma-aminobutyric acid receptor (TC 1.A.9.5) subfamily. GABRD sub-subfamily. Heteropentamer, formed by a combination of alpha (GABRA1-6), beta (GABRB1-3), gamma (GABRG1-3), delta (GABRD), epsilon (GABRE), rho (GABRR1-3), pi (GABRP) and theta (GABRQ) chains, each subunit exhibiting distinct physiological and pharmacological properties.

Its subcellular location is the cell membrane. The enzyme catalyses chloride(in) = chloride(out). Its function is as follows. Delta subunit of the heteropentameric ligand-gated chloride channel gated by gamma-aminobutyric acid (GABA), a major inhibitory neurotransmitter in the brain. GABA-gated chloride channels, also named GABA(A) receptors (GABAAR), consist of five subunits arranged around a central pore and contain GABA active binding site(s) located at the alpha and beta subunit interface(s). When activated by GABA, GABAARs selectively allow the flow of chloride anions across the cell membrane down their electrochemical gradient. GABAARs containing delta/GABRD subunits are predominantly located in extrasynaptic or perisynaptic positions on hippocampus and cerebellar granule cells, and contribute to the tonic GABAergic inhibition. GABAAR containing alpha-4-beta-3-delta subunits can simultaneously bind GABA and histamine where histamine binds at the interface of two neighboring beta subunits, which may be involved in the regulation of sleep and wakefulness. This is Gamma-aminobutyric acid receptor subunit delta from Homo sapiens (Human).